Consider the following 237-residue polypeptide: Phosphatidylserine decarboxylase proenzyme (237 aa).

Catalysis depends on Ser206, which acts as the Schiff-base intermediate with substrate; via pyruvic acid. Pyruvic acid (Ser); by autocatalysis is present on Ser206.

This sequence belongs to the phosphatidylserine decarboxylase family. PSD-A subfamily. In terms of assembly, heterodimer of a large membrane-associated beta subunit and a small pyruvoyl-containing alpha subunit. The cofactor is pyruvate. Post-translationally, is synthesized initially as an inactive proenzyme. Formation of the active enzyme involves a self-maturation process in which the active site pyruvoyl group is generated from an internal serine residue via an autocatalytic post-translational modification. Two non-identical subunits are generated from the proenzyme in this reaction, and the pyruvate is formed at the N-terminus of the alpha chain, which is derived from the carboxyl end of the proenzyme. The post-translation cleavage follows an unusual pathway, termed non-hydrolytic serinolysis, in which the side chain hydroxyl group of the serine supplies its oxygen atom to form the C-terminus of the beta chain, while the remainder of the serine residue undergoes an oxidative deamination to produce ammonia and the pyruvoyl prosthetic group on the alpha chain.

It is found in the cell membrane. The enzyme catalyses a 1,2-diacyl-sn-glycero-3-phospho-L-serine + H(+) = a 1,2-diacyl-sn-glycero-3-phosphoethanolamine + CO2. Its pathway is phospholipid metabolism; phosphatidylethanolamine biosynthesis; phosphatidylethanolamine from CDP-diacylglycerol: step 2/2. In terms of biological role, catalyzes the formation of phosphatidylethanolamine (PtdEtn) from phosphatidylserine (PtdSer). This chain is Phosphatidylserine decarboxylase proenzyme, found in Mycobacteroides abscessus (strain ATCC 19977 / DSM 44196 / CCUG 20993 / CIP 104536 / JCM 13569 / NCTC 13031 / TMC 1543 / L948) (Mycobacterium abscessus).